We begin with the raw amino-acid sequence, 596 residues long: Polyphenol oxidase B, chloroplastic (596 aa).

Positions 1-23 are disordered; the sequence is MASVVCNSSSSTTTTTLKTPFTS. A chloroplast-targeting transit peptide spans 1–87; the sequence is MASVVCNSSS…ANAIPLAASA (87 aa). The segment covering 8 to 23 has biased composition (low complexity); the sequence is SSSSTTTTTLKTPFTS. Intrachain disulfides connect Cys98/Cys114 and Cys113/Cys182. Residues His181, His199, His208, His329, His333, and His371 each contribute to the Cu cation site. Residues 185–199 constitute a cross-link (2'-(S-cysteinyl)-histidine (Cys-His)); that stretch reads CNGAYIIGGKELQVH.

The protein belongs to the tyrosinase family. The cofactor is Cu(2+).

The protein resides in the plastid. It is found in the chloroplast thylakoid lumen. The enzyme catalyses 2 catechol + O2 = 2 1,2-benzoquinone + 2 H2O. Its function is as follows. Catalyzes the oxidation of mono- and o-diphenols to o-diquinones. This chain is Polyphenol oxidase B, chloroplastic, found in Solanum lycopersicum (Tomato).